The following is a 342-amino-acid chain: Phosphate acyltransferase (342 aa).

The protein belongs to the PlsX family. Homodimer. Probably interacts with PlsY.

Its subcellular location is the cytoplasm. It catalyses the reaction a fatty acyl-[ACP] + phosphate = an acyl phosphate + holo-[ACP]. The protein operates within lipid metabolism; phospholipid metabolism. Catalyzes the reversible formation of acyl-phosphate (acyl-PO(4)) from acyl-[acyl-carrier-protein] (acyl-ACP). This enzyme utilizes acyl-ACP as fatty acyl donor, but not acyl-CoA. In Shewanella loihica (strain ATCC BAA-1088 / PV-4), this protein is Phosphate acyltransferase.